The sequence spans 199 residues: Peptidyl-tRNA hydrolase (199 aa).

Residue Tyr-25 participates in tRNA binding. The Proton acceptor role is filled by His-30. The tRNA site is built by Tyr-76, Asn-78, and Asn-124.

It belongs to the PTH family. In terms of assembly, monomer.

It is found in the cytoplasm. It catalyses the reaction an N-acyl-L-alpha-aminoacyl-tRNA + H2O = an N-acyl-L-amino acid + a tRNA + H(+). Its function is as follows. Hydrolyzes ribosome-free peptidyl-tRNAs (with 1 or more amino acids incorporated), which drop off the ribosome during protein synthesis, or as a result of ribosome stalling. Functionally, catalyzes the release of premature peptidyl moieties from peptidyl-tRNA molecules trapped in stalled 50S ribosomal subunits, and thus maintains levels of free tRNAs and 50S ribosomes. This chain is Peptidyl-tRNA hydrolase, found in Mycobacterium leprae (strain Br4923).